The primary structure comprises 406 residues: D-alanyl-D-alanine carboxypeptidase (406 aa).

An N-terminal signal peptide occupies residues 1 to 31 (MVSGTVGRGTALGAVLLALLAVPAQAGTAAA). S93 acts as the Acyl-ester intermediate in catalysis. Residues 151–154 (FAQT), 190–192 (YSN), R316, 330–332 (TGT), and 357–358 (SN) contribute to the substrate site. A propeptide spanning residues 381 to 406 (AKLRSATSSATTVERHEDIAPGIARD) is cleaved from the precursor. Positions 387 to 406 (TSSATTVERHEDIAPGIARD) are disordered. Residues 393 to 406 (VERHEDIAPGIARD) are compositionally biased toward basic and acidic residues.

Belongs to the peptidase S12 family.

The protein resides in the secreted. The enzyme catalyses Preferential cleavage: (Ac)2-L-Lys-D-Ala-|-D-Ala. Also transpeptidation of peptidyl-alanyl moieties that are N-acyl substituents of D-alanine.. Its pathway is cell wall biogenesis; peptidoglycan biosynthesis. Its function is as follows. Catalyzes distinct carboxypeptidation and transpeptidation reactions during the last stages of wall peptidoglycan synthesis. Mistaking a beta-lactam antibiotic molecule for a normal substrate (i.e. a D-alanyl-D-alanine-terminated peptide), it becomes immobilized in the form of a long-lived, serine-ester-linked acyl enzyme and thus behave as penicillin-binding protein (PBP). This chain is D-alanyl-D-alanine carboxypeptidase, found in Streptomyces sp. (strain R61).